Here is a 128-residue protein sequence, read N- to C-terminus: Glycine cleavage system H protein (128 aa).

The region spanning 24–105 (SLTIGVTDHA…AYAAWLFKLK (82 aa)) is the Lipoyl-binding domain. An N6-lipoyllysine modification is found at Lys-65.

It belongs to the GcvH family. As to quaternary structure, the glycine cleavage system is composed of four proteins: P, T, L and H. (R)-lipoate is required as a cofactor.

The glycine cleavage system catalyzes the degradation of glycine. The H protein shuttles the methylamine group of glycine from the P protein to the T protein. This is Glycine cleavage system H protein from Aromatoleum aromaticum (strain DSM 19018 / LMG 30748 / EbN1) (Azoarcus sp. (strain EbN1)).